A 196-amino-acid chain; its full sequence is Large ribosomal subunit protein bL25 (196 aa).

Belongs to the bacterial ribosomal protein bL25 family. CTC subfamily. Part of the 50S ribosomal subunit; part of the 5S rRNA/L5/L18/L25 subcomplex. Contacts the 5S rRNA. Binds to the 5S rRNA independently of L5 and L18.

Functionally, this is one of the proteins that binds to the 5S RNA in the ribosome where it forms part of the central protuberance. This chain is Large ribosomal subunit protein bL25, found in Bacteroides fragilis (strain ATCC 25285 / DSM 2151 / CCUG 4856 / JCM 11019 / LMG 10263 / NCTC 9343 / Onslow / VPI 2553 / EN-2).